Reading from the N-terminus, the 576-residue chain is Glutamine--tRNA ligase (576 aa).

A 'HIGH' region motif is present at residues 47 to 57 (PEPNGYLHIGH). ATP contacts are provided by residues 48-50 (EPN) and 54-60 (HIGHAKS). L-glutamine is bound by residues D80 and Y229. Residues T248 and 283-284 (RL) each bind ATP. A 'KMSKS' region motif is present at residues 290 to 294 (ITSKR).

It belongs to the class-I aminoacyl-tRNA synthetase family. In terms of assembly, monomer.

It is found in the cytoplasm. The enzyme catalyses tRNA(Gln) + L-glutamine + ATP = L-glutaminyl-tRNA(Gln) + AMP + diphosphate. The polypeptide is Glutamine--tRNA ligase (Ralstonia pickettii (strain 12J)).